We begin with the raw amino-acid sequence, 90 residues long: Kunitz-type serine protease inhibitor bitisilin-1 (90 aa).

An N-terminal signal peptide occupies residues 1 to 24 (MSSGGLLLLLGLLTLWAELTPVSG). The region spanning 31-81 (CNLPADTGPCKAYEPRFYYDSVSKECQKFTYGGCKGNSNNFESMDECRKTC) is the BPTI/Kunitz inhibitor domain. 3 disulfides stabilise this stretch: Cys-31-Cys-81, Cys-40-Cys-64, and Cys-56-Cys-77.

Belongs to the venom Kunitz-type family. In terms of tissue distribution, expressed by the venom gland.

Its subcellular location is the secreted. Serine protease inhibitor. The chain is Kunitz-type serine protease inhibitor bitisilin-1 from Bitis gabonica (Gaboon adder).